A 507-amino-acid chain; its full sequence is 2,3-bisphosphoglycerate-independent phosphoglycerate mutase (507 aa).

2 residues coordinate Mn(2+): aspartate 13 and serine 63. The Phosphoserine intermediate role is filled by serine 63. Substrate-binding positions include histidine 124, 153-154, arginine 183, arginine 189, 254-257, and lysine 330; these read RD and RADR. Mn(2+) contacts are provided by aspartate 396, histidine 400, aspartate 437, histidine 438, and histidine 456.

This sequence belongs to the BPG-independent phosphoglycerate mutase family. As to quaternary structure, monomer. It depends on Mn(2+) as a cofactor.

The catalysed reaction is (2R)-2-phosphoglycerate = (2R)-3-phosphoglycerate. It functions in the pathway carbohydrate degradation; glycolysis; pyruvate from D-glyceraldehyde 3-phosphate: step 3/5. Functionally, catalyzes the interconversion of 2-phosphoglycerate and 3-phosphoglycerate. The chain is 2,3-bisphosphoglycerate-independent phosphoglycerate mutase from Paracoccus denitrificans (strain Pd 1222).